We begin with the raw amino-acid sequence, 1647 residues long: Probable ubiquitin fusion degradation protein C12B10.01c (1647 aa).

The span at 192 to 209 (TYSDSSNYHTSTDSSQYN) shows a compositional bias: polar residues. 2 disordered regions span residues 192 to 288 (TYSD…PSAA) and 1039 to 1076 (ESMSGSSRNSSGDYTDSMSQDAPNHTTEPSERRDSSTS). Composition is skewed to acidic residues over residues 218 to 228 (DTNDGTDDDIN) and 245 to 273 (ERDEDVDEEEEEDDDENNDEGDDEDENEN). Positions 1039 to 1050 (ESMSGSSRNSSG) are enriched in low complexity. Over residues 1051–1065 (DYTDSMSQDAPNHTT) the composition is skewed to polar residues. Positions 1066-1076 (EPSERRDSSTS) are enriched in basic and acidic residues. A K-box region spans residues 1183–1257 (IENILTDFSN…SVSFLLSRNP (75 aa)). The HECT domain maps to 1294–1647 (ATYAASENIL…LEGQGSFHLS (354 aa)). The Glycyl thioester intermediate role is filled by Cys-1614.

This sequence belongs to the UPL family. K-HECT subfamily.

It catalyses the reaction S-ubiquitinyl-[E2 ubiquitin-conjugating enzyme]-L-cysteine + [acceptor protein]-L-lysine = [E2 ubiquitin-conjugating enzyme]-L-cysteine + N(6)-ubiquitinyl-[acceptor protein]-L-lysine.. Its function is as follows. E3 ubiquitin-protein ligase which accepts ubiquitin from an E2 ubiquitin-conjugating enzyme in the form of a thioester and then directly transfers the ubiquitin to targeted substrates. The sequence is that of Probable ubiquitin fusion degradation protein C12B10.01c from Schizosaccharomyces pombe (strain 972 / ATCC 24843) (Fission yeast).